The primary structure comprises 557 residues: Interferon alpha/beta receptor 1 (557 aa).

The first 27 residues, M1–G27, serve as a signal peptide directing secretion. The Extracellular segment spans residues K28–K436. Fibronectin type-III domains follow at residues S32 to A126, Q127 to N227, P231 to Q329, and F331 to G432. N50, N58, N81, N88, N110, and N172 each carry an N-linked (GlcNAc...) asparagine glycan. C79 and C87 are joined by a disulfide. An intrachain disulfide couples C199 to C220. The N-linked (GlcNAc...) asparagine glycan is linked to N254. Residues C283 and C291 are joined by a disulfide bond. N-linked (GlcNAc...) asparagine glycans are attached at residues N313, N314, N376, N416, and N433. C403 and C426 are disulfide-bonded. Residues I437 to A457 traverse the membrane as a helical segment. Residues K458–V557 lie on the Cytoplasmic side of the membrane. A lipid anchor (S-palmitoyl cysteine) is attached at C463. 2 positions are modified to phosphotyrosine; by TYK2: Y466 and Y481. The interval L491–E500 is important for interaction with TYK2. A Phosphoserine modification is found at S495. Glycyl lysine isopeptide (Lys-Gly) (interchain with G-Cter in ubiquitin) cross-links involve residues K501, K525, and K526. The segment at E516–V557 is disordered. Positions S528–S539 are enriched in polar residues. S535 bears the Phosphoserine mark.

Belongs to the type II cytokine receptor family. Heterodimer with IFNAR2; forming the receptor for type I interferon. Interacts with TYK2. Interacts with STAT1 and STAT2; the interaction requires its phosphorylation at Tyr-466. Interacts (serine-phosphorylated form) with FBXW11, the substrate recognition component of a SCF (SKP1-CUL1-F-box protein) E3 ubiquitin-protein ligase complex. Interacts with SHMT2; this promotes interaction with ABRAXAS2 and the BRISC complex. Interacts with TRIM10; this interaction prevents association between IFNAR1 and TYK2. Ubiquitinated, leading to its internalization and degradation. Polyubiquitinated via 'Lys-48'-linked and 'Lys-63'-linked ubiquitin chains, leading to receptor internalization and lysosomal degradation. The 'Lys-63'-linked ubiquitin chains are cleaved off by the BRISC complex. In terms of processing, phosphorylated on tyrosine residues in response to interferon-binding: phosphorylation by TYK2 tyrosine kinase creates docking sites for STAT proteins. Phosphorylated on serine residues in response to interferon binding; this promotes interaction with FBXW11 and ubiquitination. Post-translationally, palmitoylation at Cys-463 is required for the activation of STAT1 and STAT2. As to expression, IFN receptors are present in all tissues and even on the surface of most IFN-resistant cells. Isoform 1, isoform 2 and isoform 3 are expressed in the IFN-alpha sensitive myeloma cell line U266B1. Isoform 2 and isoform 3 are expressed in the IFN-alpha resistant myeloma cell line U266R. Isoform 1 is not expressed in IFN-alpha resistant myeloma cell line U266R.

It localises to the cell membrane. Its subcellular location is the late endosome. It is found in the lysosome. Functionally, together with IFNAR2, forms the heterodimeric receptor for type I interferons (including interferons alpha, beta, epsilon, omega and kappa). Type I interferon binding activates the JAK-STAT signaling cascade, resulting in transcriptional activation or repression of interferon-regulated genes that encode the effectors of the interferon response. Mechanistically, type I interferon-binding brings the IFNAR1 and IFNAR2 subunits into close proximity with one another, driving their associated Janus kinases (JAKs) (TYK2 bound to IFNAR1 and JAK1 bound to IFNAR2) to cross-phosphorylate one another. The activated kinases phosphorylate specific tyrosine residues on the intracellular domains of IFNAR1 and IFNAR2, forming docking sites for the STAT transcription factors. STAT proteins are then phosphorylated by the JAKs, promoting their translocation into the nucleus to regulate expression of interferon-regulated genes. Can also act independently of IFNAR2: form an active IFNB1 receptor by itself and activate a signaling cascade that does not involve activation of the JAK-STAT pathway. This is Interferon alpha/beta receptor 1 (IFNAR1) from Homo sapiens (Human).